The following is a 224-amino-acid chain: Toxin coregulated pilin (224 aa).

Residues 1 to 25 (MQLLKQLFKKKFVKEEHDKKTGQEG) constitute a propeptide, atypical leader sequence. M26 is subject to N-methylmethionine. A helical membrane pass occupies residues 26–46 (MTLLEVIIVLGIMGVVSAGVV). A disulfide bridge links C145 with C211.

Its subcellular location is the fimbrium. It localises to the membrane. In terms of biological role, major component of the toxin co-regulated pilus (tcp) which is a type IV pilus essential for bacterial aggregation and subsequent colonization in the host small intestine. This chain is Toxin coregulated pilin (tcpA), found in Vibrio cholerae.